Here is a 332-residue protein sequence, read N- to C-terminus: Glycerol-3-phosphate dehydrogenase [NAD(P)+] (332 aa).

Positions 13, 34, and 108 each coordinate NADPH. Residues Lys108, Gly136, and Ser138 each contribute to the sn-glycerol 3-phosphate site. An NADPH-binding site is contributed by Ala140. Positions 191, 244, 254, 255, and 256 each coordinate sn-glycerol 3-phosphate. The Proton acceptor role is filled by Lys191. NADPH is bound at residue Arg255. Val279 and Glu281 together coordinate NADPH.

This sequence belongs to the NAD-dependent glycerol-3-phosphate dehydrogenase family.

Its subcellular location is the cytoplasm. The enzyme catalyses sn-glycerol 3-phosphate + NAD(+) = dihydroxyacetone phosphate + NADH + H(+). It carries out the reaction sn-glycerol 3-phosphate + NADP(+) = dihydroxyacetone phosphate + NADPH + H(+). It functions in the pathway membrane lipid metabolism; glycerophospholipid metabolism. Its function is as follows. Catalyzes the reduction of the glycolytic intermediate dihydroxyacetone phosphate (DHAP) to sn-glycerol 3-phosphate (G3P), the key precursor for phospholipid synthesis. This chain is Glycerol-3-phosphate dehydrogenase [NAD(P)+], found in Francisella tularensis subsp. tularensis (strain FSC 198).